Consider the following 145-residue polypeptide: Phospholipase A2, membrane associated (145 aa).

Residues Met-1–Gly-20 form the signal peptide. Intrachain disulfides connect Cys-46-Cys-138, Cys-48-Cys-64, Cys-63-Cys-118, Cys-69-Cys-145, Cys-70-Cys-111, Cys-79-Cys-104, and Cys-97-Cys-109. Positions 47, 49, and 51 each coordinate Ca(2+). The active site involves His-67. Position 68 (Asp-68) interacts with Ca(2+). Asp-112 is an active-site residue.

It belongs to the phospholipase A2 family. The cofactor is Ca(2+). Alveolar macrophages, and at much lower levels in peripheral blood monocytes and peritoneal macrophages.

The protein localises to the secreted. Its subcellular location is the cell membrane. It is found in the mitochondrion outer membrane. It carries out the reaction a 1,2-diacyl-sn-glycero-3-phosphoethanolamine + H2O = a 1-acyl-sn-glycero-3-phosphoethanolamine + a fatty acid + H(+). It catalyses the reaction 1-hexadecanoyl-2-(9Z-octadecenoyl)-sn-glycero-3-phosphoethanolamine + H2O = 1-hexadecanoyl-sn-glycero-3-phosphoethanolamine + (9Z)-octadecenoate + H(+). The catalysed reaction is 1-hexadecanoyl-2-(9Z,12Z-octadecadienoyl)-sn-glycero-3-phosphoethanolamine + H2O = 1-hexadecanoyl-sn-glycero-3-phosphoethanolamine + (9Z,12Z)-octadecadienoate + H(+). The enzyme catalyses 1-hexadecanoyl-2-(5Z,8Z,11Z,14Z-eicosatetraenoyl)-sn-glycero-3-phosphoethanolamine + H2O = 1-hexadecanoyl-sn-glycero-3-phosphoethanolamine + (5Z,8Z,11Z,14Z)-eicosatetraenoate + H(+). It carries out the reaction N-hexadecanoyl-1,2-di-(9Z-octadecenoyl)-sn-glycero-3-phosphoethanolamine + H2O = N-hexadecanoyl-1-(9Z-octadecenoyl)-sn-glycero-3-phosphoethanolamine + (9Z)-octadecenoate + H(+). It catalyses the reaction 1,2-dihexadecanoyl-sn-glycero-3-phospho-(1'-sn-glycerol) + H2O = 1-hexadecanoyl-sn-glycero-3-phospho-(1'-sn-glycerol) + hexadecanoate + H(+). The catalysed reaction is 1-hexadecanoyl-2-(9Z-octadecenoyl)-sn-glycero-3-phosphoglycerol + H2O = 1-hexadecanoyl-sn-glycero-3-phosphoglycerol + (9Z)-octadecenoate + H(+). The enzyme catalyses 1-hexadecanoyl-2-(9Z-octadecenoyl)-sn-glycero-3-phospho-(1'-sn-glycerol) + H2O = 1-hexadecanoyl-sn-glycero-3-phospho-(1'-sn-glycerol) + (9Z)-octadecenoate + H(+). It carries out the reaction a 1,2-diacyl-sn-glycero-3-phosphocholine + H2O = a 1-acyl-sn-glycero-3-phosphocholine + a fatty acid + H(+). It catalyses the reaction 1,2-dihexadecanoyl-sn-glycero-3-phosphocholine + H2O = 1-hexadecanoyl-sn-glycero-3-phosphocholine + hexadecanoate + H(+). The catalysed reaction is 1-hexadecanoyl-2-(9Z-octadecenoyl)-sn-glycero-3-phosphocholine + H2O = 1-hexadecanoyl-sn-glycero-3-phosphocholine + (9Z)-octadecenoate + H(+). The enzyme catalyses 1-hexadecanoyl-2-(9Z,12Z-octadecadienoyl)-sn-glycero-3-phosphocholine + H2O = (9Z,12Z)-octadecadienoate + 1-hexadecanoyl-sn-glycero-3-phosphocholine + H(+). It carries out the reaction 1-hexadecanoyl-2-(4Z,7Z,10Z,13Z,16Z,19Z-docosahexaenoyl)-sn-glycero-3-phosphocholine + H2O = (4Z,7Z,10Z,13Z,16Z,19Z)-docosahexaenoate + 1-hexadecanoyl-sn-glycero-3-phosphocholine + H(+). In terms of biological role, secretory calcium-dependent phospholipase A2 that primarily targets extracellular phospholipids with implications in host antimicrobial defense, inflammatory response and tissue regeneration. Hydrolyzes the ester bond of the fatty acyl group attached at sn-2 position of phospholipids (phospholipase A2 activity) with preference for phosphatidylethanolamines and phosphatidylglycerols over phosphatidylcholines. Contributes to lipid remodeling of cellular membranes and generation of lipid mediators involved in pathogen clearance. Displays bactericidal activity against Gram-positive bacteria by directly hydrolyzing phospholipids of the bacterial membrane. Upon sterile inflammation, targets membrane phospholipids of extracellular mitochondria released from activated platelets, generating free unsaturated fatty acids such as arachidonate that is used by neighboring leukocytes to synthesize inflammatory eicosanoids such as leukotrienes. Simultaneously, by compromising mitochondrial membrane integrity, promotes the release in circulation of potent damage-associated molecular pattern molecules that activate the innate immune response. Plays a stem cell regulator role in the intestinal crypt. Within intracellular compartment mediates Paneth cell differentiation and its stem cell supporting functions by inhibiting Wnt signaling pathway in intestinal stem cell (ICS). Secreted in the intestinal lumen upon inflammation, acts in an autocrine way and promotes prostaglandin E2 synthesis that stimulates Wnt signaling pathway in ICS cells and tissue regeneration. May play a role in the biosynthesis of N-acyl ethanolamines that regulate energy metabolism and inflammation. Hydrolyzes N-acyl phosphatidylethanolamines to N-acyl lysophosphatidylethanolamines, which are further cleaved by a lysophospholipase D to release N-acyl ethanolamines. Independent of its catalytic activity, acts as a ligand for integrins. Binds to and activates integrins ITGAV:ITGB3, ITGA4:ITGB1 and ITGA5:ITGB1. Binds to a site (site 2) which is distinct from the classical ligand-binding site (site 1) and induces integrin conformational changes and enhanced ligand binding to site 1. Induces cell proliferation in an integrin-dependent manner. The polypeptide is Phospholipase A2, membrane associated (PLA2G2A) (Cavia porcellus (Guinea pig)).